The following is a 202-amino-acid chain: Small ribosomal subunit protein uS4c (202 aa).

In terms of domain architecture, S4 RNA-binding spans 90-153 (MRLDNIIFRL…KSEAIISKNI (64 aa)).

It belongs to the universal ribosomal protein uS4 family. In terms of assembly, part of the 30S ribosomal subunit. Contacts protein S5. The interaction surface between S4 and S5 is involved in control of translational fidelity.

It is found in the plastid. It localises to the chloroplast. Functionally, one of the primary rRNA binding proteins, it binds directly to 16S rRNA where it nucleates assembly of the body of the 30S subunit. With S5 and S12 plays an important role in translational accuracy. This is Small ribosomal subunit protein uS4c (rps4) from Hookeria lucens (Moss).